Reading from the N-terminus, the 245-residue chain is UDP-2,3-diacylglucosamine hydrolase (245 aa).

The Mn(2+) site is built by D8, H10, D41, N80, and H115. Residue 80 to 81 (NR) participates in substrate binding. Residues D123, S161, K165, K168, and H196 each coordinate substrate. Residues H196 and H198 each coordinate Mn(2+).

The protein belongs to the LpxH family. Requires Mn(2+) as cofactor.

Its subcellular location is the cell inner membrane. It carries out the reaction UDP-2-N,3-O-bis[(3R)-3-hydroxytetradecanoyl]-alpha-D-glucosamine + H2O = 2-N,3-O-bis[(3R)-3-hydroxytetradecanoyl]-alpha-D-glucosaminyl 1-phosphate + UMP + 2 H(+). Its pathway is glycolipid biosynthesis; lipid IV(A) biosynthesis; lipid IV(A) from (3R)-3-hydroxytetradecanoyl-[acyl-carrier-protein] and UDP-N-acetyl-alpha-D-glucosamine: step 4/6. Functionally, hydrolyzes the pyrophosphate bond of UDP-2,3-diacylglucosamine to yield 2,3-diacylglucosamine 1-phosphate (lipid X) and UMP by catalyzing the attack of water at the alpha-P atom. Involved in the biosynthesis of lipid A, a phosphorylated glycolipid that anchors the lipopolysaccharide to the outer membrane of the cell. The protein is UDP-2,3-diacylglucosamine hydrolase of Psychromonas ingrahamii (strain DSM 17664 / CCUG 51855 / 37).